A 265-amino-acid chain; its full sequence is Putative carbamate hydrolase RutD (265 aa).

Residues 14–123 (PTLVLSSGLG…WSSPNPHSAR (110 aa)) form the AB hydrolase-1 domain.

This sequence belongs to the AB hydrolase superfamily. Hydrolase RutD family.

It catalyses the reaction carbamate + 2 H(+) = NH4(+) + CO2. Its function is as follows. Involved in pyrimidine catabolism. May facilitate the hydrolysis of carbamate, a reaction that can also occur spontaneously. This is Putative carbamate hydrolase RutD from Stutzerimonas stutzeri (strain A1501) (Pseudomonas stutzeri).